Reading from the N-terminus, the 58-residue chain is UPF0391 membrane protein Patl_4137 (58 aa).

A run of 2 helical transmembrane segments spans residues 4 to 24 (WALTFLIIAILAGVMGFGGIA) and 27 to 47 (AAGIAKIIFFVFLVLLVLSLV).

This sequence belongs to the UPF0391 family.

The protein localises to the cell membrane. This chain is UPF0391 membrane protein Patl_4137, found in Pseudoalteromonas atlantica (strain T6c / ATCC BAA-1087).